The primary structure comprises 393 residues: S-adenosylmethionine synthase (393 aa).

Glutamate 9 serves as a coordination point for Mg(2+). Histidine 15 provides a ligand contact to ATP. Position 43 (glutamate 43) interacts with K(+). Positions 56 and 99 each coordinate L-methionine. ATP contacts are provided by residues aspartate 167–lysine 169, serine 235–phenylalanine 238, aspartate 246, arginine 252–lysine 253, alanine 269, lysine 273, and lysine 277. Aspartate 246 lines the L-methionine pocket. L-methionine is bound at residue lysine 277.

The protein belongs to the AdoMet synthase family. In terms of assembly, homotetramer. Mn(2+) serves as cofactor. Mg(2+) is required as a cofactor. The cofactor is Co(2+). It depends on K(+) as a cofactor.

It localises to the cytoplasm. The catalysed reaction is L-methionine + ATP + H2O = S-adenosyl-L-methionine + phosphate + diphosphate. The protein operates within amino-acid biosynthesis; S-adenosyl-L-methionine biosynthesis; S-adenosyl-L-methionine from L-methionine: step 1/1. In terms of biological role, catalyzes the formation of S-adenosylmethionine from methionine and ATP. The reaction comprises two steps that are both catalyzed by the same enzyme: formation of S-adenosylmethionine (AdoMet) and triphosphate, and subsequent hydrolysis of the triphosphate. The sequence is that of S-adenosylmethionine synthase (SAMS) from Brassica rapa subsp. pekinensis (Chinese cabbage).